The following is a 284-amino-acid chain: MATAIRGLKLQTEDYFLTDKNAVMVAERHPQPVFPLHHHDFDELVIVWRGNGLHLWNDVPYRITRGDMFYVSAHDRHSYESVHELELDNILYIRNRLTLSADWQTLLPSGELPQSQRHWCLGSEGMDTIREKVDALTQECMKSDALSLQLSEALLLQIALLAARYRHSPDSPQLADAHQLDMLMNALRASIAAPFRFEAFCEQHHFSARSLRSRFKEQTGMSVPHYLRQLRLCKAMELLRYDLQTIGDVAALCGFEDSNYFSVVFHQAFGVSPSAYRQRFLNVE.

Residues 181 to 279 form the HTH araC/xylS-type domain; the sequence is DMLMNALRAS…GVSPSAYRQR (99 aa). 2 consecutive DNA-binding regions (H-T-H motif) follow at residues 198–219 and 246–269; these read EAFC…KEQT and IGDV…HQAF.

As to quaternary structure, binds DNA as a dimer.

It localises to the cytoplasm. Its function is as follows. Activates expression of the rhaSR operon in response to L-rhamnose. The polypeptide is HTH-type transcriptional activator RhaR (Pectobacterium atrosepticum (strain SCRI 1043 / ATCC BAA-672) (Erwinia carotovora subsp. atroseptica)).